Reading from the N-terminus, the 362-residue chain is Zinc transporter 9 (362 aa).

The first 21 residues, 1 to 21, serve as a signal peptide directing secretion; that stretch reads MAFDLKLTACLLLAVFSLAAA. Residues 22–42 are Extracellular-facing; sequence ADCECQPSDEGHDAAKSRTLK. A helical membrane pass occupies residues 43-63; the sequence is VIAIFCILVGSSAGCAIPSLG. At 64–74 the chain is on the cytoplasmic side; it reads RRFPALRPDTS. The helical transmembrane segment at 75–95 threads the bilayer; that stretch reads LFFALKAFAAGVILATAFVHI. At 96 to 120 the chain is on the extracellular side; it reads LPVSFDKLGSPCLVDGPWRKYPFTG. Residues 121–141 form a helical membrane-spanning segment; sequence LVAMLAAVATLLLDTIATGYF. Over 142-207 the chain is Cytoplasmic; that stretch reads LQRAQDSRGA…EDRAKLVRHR (66 aa). A helical transmembrane segment spans residues 208 to 228; sequence VISQVFELGIIVHSIIIGISL. Residues 229-239 are Extracellular-facing; it reads GASESPSTIRP. A helical membrane pass occupies residues 240–260; that stretch reads LVAALTFHQFFEGIGLGGCIV. Residues 261–269 are Cytoplasmic-facing; that stretch reads QARFHLKSA. Residues 270 to 290 form a helical membrane-spanning segment; the sequence is VTMAIFFSLTTPVGIMIGIGI. Over 291 to 301 the chain is Extracellular; sequence SSAYNENSPTA. A helical membrane pass occupies residues 302–322; the sequence is LIVEGILDAAAAGILNYMALV. Residues 323–341 are Cytoplasmic-facing; the sequence is DLLAEDFMNPRVRKSGRLQ. Residues 342–362 form a helical membrane-spanning segment; sequence LIISILLLVGIALMSLLGIWA.

It belongs to the ZIP transporter (TC 2.A.5) family.

Its subcellular location is the cell membrane. Zinc transporter that may be involved in zinc uptake from the rhizosphere. This is Zinc transporter 9 (ZIP9) from Oryza sativa subsp. japonica (Rice).